A 170-amino-acid polypeptide reads, in one-letter code: NADH-quinone oxidoreductase subunit B (170 aa).

Positions 46, 47, 111, and 141 each coordinate [4Fe-4S] cluster.

The protein belongs to the complex I 20 kDa subunit family. As to quaternary structure, NDH-1 is composed of 14 different subunits. Subunits NuoB, C, D, E, F, and G constitute the peripheral sector of the complex. It depends on [4Fe-4S] cluster as a cofactor.

Its subcellular location is the cell membrane. The enzyme catalyses a quinone + NADH + 5 H(+)(in) = a quinol + NAD(+) + 4 H(+)(out). In terms of biological role, NDH-1 shuttles electrons from NADH, via FMN and iron-sulfur (Fe-S) centers, to quinones in the respiratory chain. The immediate electron acceptor for the enzyme in this species is believed to be a menaquinone. Couples the redox reaction to proton translocation (for every two electrons transferred, four hydrogen ions are translocated across the cytoplasmic membrane), and thus conserves the redox energy in a proton gradient. This Geobacillus sp. (strain WCH70) protein is NADH-quinone oxidoreductase subunit B.